Reading from the N-terminus, the 313-residue chain is Porphobilinogen deaminase (313 aa).

S-(dipyrrolylmethanemethyl)cysteine is present on C242.

This sequence belongs to the HMBS family. As to quaternary structure, monomer. Dipyrromethane serves as cofactor.

The enzyme catalyses 4 porphobilinogen + H2O = hydroxymethylbilane + 4 NH4(+). It functions in the pathway porphyrin-containing compound metabolism; protoporphyrin-IX biosynthesis; coproporphyrinogen-III from 5-aminolevulinate: step 2/4. Functionally, tetrapolymerization of the monopyrrole PBG into the hydroxymethylbilane pre-uroporphyrinogen in several discrete steps. In Pseudomonas fluorescens (strain Pf0-1), this protein is Porphobilinogen deaminase.